Here is a 388-residue protein sequence, read N- to C-terminus: tRNA (guanine(26)-N(2))-dimethyltransferase (388 aa).

A Trm1 methyltransferase domain is found at 4-383 (RTIVEGTTKI…APIAEIKKII (380 aa)). S-adenosyl-L-methionine-binding residues include Arg41, Arg78, Asp94, and Ala123. Residues Cys251, Cys254, Cys271, and Cys274 each contribute to the Zn(2+) site.

The protein belongs to the class I-like SAM-binding methyltransferase superfamily. Trm1 family.

The catalysed reaction is guanosine(26) in tRNA + 2 S-adenosyl-L-methionine = N(2)-dimethylguanosine(26) in tRNA + 2 S-adenosyl-L-homocysteine + 2 H(+). In terms of biological role, dimethylates a single guanine residue at position 26 of a number of tRNAs using S-adenosyl-L-methionine as donor of the methyl groups. This chain is tRNA (guanine(26)-N(2))-dimethyltransferase, found in Methanosarcina acetivorans (strain ATCC 35395 / DSM 2834 / JCM 12185 / C2A).